Consider the following 368-residue polypeptide: tRNA-specific 2-thiouridylase MnmA (368 aa).

ATP-binding positions include 10–17 and Met-36; that span reads AMSGGIDS. Residue Cys-106 is the Nucleophile of the active site. A disulfide bridge links Cys-106 with Cys-203. ATP is bound at residue Gly-130. The segment at 152 to 154 is interaction with tRNA; the sequence is KDQ. Cys-203 (cysteine persulfide intermediate) is an active-site residue. Residues 313–314 are interaction with tRNA; sequence RY.

This sequence belongs to the MnmA/TRMU family.

Its subcellular location is the cytoplasm. The enzyme catalyses S-sulfanyl-L-cysteinyl-[protein] + uridine(34) in tRNA + AH2 + ATP = 2-thiouridine(34) in tRNA + L-cysteinyl-[protein] + A + AMP + diphosphate + H(+). Catalyzes the 2-thiolation of uridine at the wobble position (U34) of tRNA, leading to the formation of s(2)U34. The polypeptide is tRNA-specific 2-thiouridylase MnmA (Cytophaga hutchinsonii (strain ATCC 33406 / DSM 1761 / CIP 103989 / NBRC 15051 / NCIMB 9469 / D465)).